The chain runs to 799 residues: Dipeptidyl peptidase family member 1 (799 aa).

Residues Met-1–Ala-31 are Cytoplasmic-facing. Residues Ile-32–Leu-52 form a helical; Signal-anchor for type II membrane protein membrane-spanning segment. Residues Phe-53–Lys-799 lie on the Lumenal side of the membrane. Residues Asn-64, Asn-138, Asn-267, and Asn-335 are each glycosylated (N-linked (GlcNAc...) asparagine). The cysteines at positions 474 and 477 are disulfide-linked. An N-linked (GlcNAc...) asparagine glycan is attached at Asn-481. A disulfide bond links Cys-482 and Cys-500. A glycan (N-linked (GlcNAc...) asparagine) is linked at Asn-512. Residues Ser-669, Asp-742, and His-774 each act as charge relay system in the active site. Cys-689 and Cys-794 form a disulfide bridge.

The protein belongs to the peptidase S9B family. DPPIV subfamily.

It localises to the cell membrane. In terms of biological role, removes N-terminal dipeptides sequentially from polypeptides. Essential for control of distal tip cell migration. In Caenorhabditis elegans, this protein is Dipeptidyl peptidase family member 1 (dpf-1).